An 848-amino-acid chain; its full sequence is Paramyosin (848 aa).

The tract at residues 1–9 is nonhelical region; it reads AFGSMSVAD. The stretch at 10–833 forms a coiled coil; the sequence is LGSLTRLEDK…HLIRAKHRSS (824 aa). The tract at residues 834–848 is nonhelical region; the sequence is VVTGKNASASKIYVL.

The protein belongs to the paramyosin family. As to quaternary structure, homodimer.

It is found in the cytoplasm. The protein localises to the myofibril. In terms of biological role, paramyosin is a major structural component of many thick filaments isolated from invertebrate muscles. This chain is Paramyosin, found in Dirofilaria immitis (Canine heartworm).